Reading from the N-terminus, the 152-residue chain is Probable flagellum biosynthesis repressor protein FlbT (152 aa).

The protein belongs to the FlbT family.

Its function is as follows. Has a post-transcriptional repressor function in flagellum biogenesis. Associates with the 5'-UTR of fljK mRNA and promotes its degradation. This Brucella abortus (strain S19) protein is Probable flagellum biosynthesis repressor protein FlbT.